A 295-amino-acid chain; its full sequence is N-acetylmuramic acid 6-phosphate etherase (295 aa).

In terms of domain architecture, SIS spans 53–216; that stretch reads AIQRFNNGGR…STMTMIGVGK (164 aa). E81 acts as the Proton donor in catalysis. E112 is an active-site residue.

The protein belongs to the GCKR-like family. MurNAc-6-P etherase subfamily. In terms of assembly, homodimer.

The enzyme catalyses N-acetyl-D-muramate 6-phosphate + H2O = N-acetyl-D-glucosamine 6-phosphate + (R)-lactate. Its pathway is amino-sugar metabolism; N-acetylmuramate degradation. Specifically catalyzes the cleavage of the D-lactyl ether substituent of MurNAc 6-phosphate, producing GlcNAc 6-phosphate and D-lactate. The chain is N-acetylmuramic acid 6-phosphate etherase from Staphylococcus epidermidis (strain ATCC 35984 / DSM 28319 / BCRC 17069 / CCUG 31568 / BM 3577 / RP62A).